Consider the following 1278-residue polypeptide: Cytoplasmic FMR1-interacting protein 2 (1278 aa).

Lys-1062 is modified (N6-acetyllysine).

Belongs to the CYFIP family. As to quaternary structure, component of the WAVE1 complex composed of ABI2, CYFIP2, BRK1, NCKAP1 and WASF1/WAVE1. Interacts with FMR1, FXR1 and FXR2. Interacts with FMR1 isoform 6; the interaction occurs in a RNA-dependent manner. Interacts with RAC1 (activated form) which causes the complex to dissociate, releasing activated WASF1. The complex can also be activated by NCK1. Interacts with SHANK3; the interaction mediates the association of SHANK3 with the WAVE1 complex. Interacts with TMEM108 (via N-terminus); the interaction associates TMEM108 with the WAVE1 complex. In terms of tissue distribution, expressed in T-cells. Increased expression is observed in CD4(+) T-lymphocytes from patients with multiple sclerosis (at protein level).

The protein localises to the cytoplasm. It localises to the nucleus. It is found in the perinuclear region. Its subcellular location is the synapse. The protein resides in the synaptosome. Its function is as follows. Involved in T-cell adhesion and p53/TP53-dependent induction of apoptosis. Does not bind RNA. As component of the WAVE1 complex, required for BDNF-NTRK2 endocytic trafficking and signaling from early endosomes. The protein is Cytoplasmic FMR1-interacting protein 2 of Homo sapiens (Human).